Consider the following 260-residue polypeptide: Glutamate racemase (260 aa).

Substrate is bound by residues Asp-14–Ser-15 and Tyr-46–Gly-47. Cys-77 (proton donor/acceptor) is an active-site residue. Asn-78–Thr-79 lines the substrate pocket. Residue Cys-188 is the Proton donor/acceptor of the active site. Thr-189–His-190 is a binding site for substrate.

The protein belongs to the aspartate/glutamate racemases family.

It carries out the reaction L-glutamate = D-glutamate. It participates in cell wall biogenesis; peptidoglycan biosynthesis. Its function is as follows. Provides the (R)-glutamate required for cell wall biosynthesis. This is Glutamate racemase from Clostridium perfringens (strain ATCC 13124 / DSM 756 / JCM 1290 / NCIMB 6125 / NCTC 8237 / Type A).